Here is a 101-residue protein sequence, read N- to C-terminus: Integration host factor subunit beta (101 aa).

The tract at residues 62 to 84 is disordered; it reads RNPKTGESVALPGKHVPHFKPGK.

The protein belongs to the bacterial histone-like protein family. In terms of assembly, heterodimer of an alpha and a beta chain.

In terms of biological role, this protein is one of the two subunits of integration host factor, a specific DNA-binding protein that functions in genetic recombination as well as in transcriptional and translational control. This chain is Integration host factor subunit beta, found in Stenotrophomonas maltophilia (strain K279a).